Here is a 550-residue protein sequence, read N- to C-terminus: Arginine--tRNA ligase (550 aa).

Positions 130-140 (ANPTGPIHIGG) match the 'HIGH' region motif.

It belongs to the class-I aminoacyl-tRNA synthetase family. As to quaternary structure, monomer.

Its subcellular location is the cytoplasm. The catalysed reaction is tRNA(Arg) + L-arginine + ATP = L-arginyl-tRNA(Arg) + AMP + diphosphate. The protein is Arginine--tRNA ligase of Mycobacterium ulcerans (strain Agy99).